Reading from the N-terminus, the 660-residue chain is DNA mismatch repair protein MutL (660 aa).

A compositionally biased stretch (polar residues) spans 341–355; it reads SFQSDGAPPTQQLSS. Disordered stretches follow at residues 341 to 362 and 378 to 398; these read SFQSDGAPPTQQLSSDVREKAE and ALSPTKQELPKSPERSERVER. The segment covering 385–398 has biased composition (basic and acidic residues); sequence ELPKSPERSERVER.

It belongs to the DNA mismatch repair MutL/HexB family.

This protein is involved in the repair of mismatches in DNA. It is required for dam-dependent methyl-directed DNA mismatch repair. May act as a 'molecular matchmaker', a protein that promotes the formation of a stable complex between two or more DNA-binding proteins in an ATP-dependent manner without itself being part of a final effector complex. This Heliobacterium modesticaldum (strain ATCC 51547 / Ice1) protein is DNA mismatch repair protein MutL.